The primary structure comprises 297 residues: HTH-type transcriptional regulator ArgP (297 aa).

The region spanning 4-60 (PDYRTLQALDAVIRERGFERAAQKLCITQSAVSQRIKQLENMFGQPLLVRTVPPRPT) is the HTH lysR-type domain. A DNA-binding region (H-T-H motif) is located at residues 21 to 40 (FERAAQKLCITQSAVSQRIK).

Belongs to the LysR transcriptional regulatory family. Homodimer.

Functionally, controls the transcription of genes involved in arginine and lysine metabolism. This Enterobacter sp. (strain 638) protein is HTH-type transcriptional regulator ArgP.